Consider the following 628-residue polypeptide: Forkhead box protein O (628 aa).

Threonine 50 is modified (phosphothreonine; by PKB/AKT1). The residue at position 81 (serine 81) is a Phosphoserine. The segment at residues 101–207 (WGNLSYADLI…ETSRYEKRRG (107 aa)) is a DNA-binding region (fork-head). Disordered stretches follow at residues 188-210 (KSVR…GRAK) and 223-270 (GLND…SSCG). Residue serine 196 is modified to Phosphoserine; by PKB/AKT1. Composition is skewed to polar residues over residues 227–236 (ATPSPSSSVS) and 261–270 (RASSNASSCG). Position 264 is a phosphoserine; by PKB/AKT1 (serine 264). 3 positions are modified to phosphoserine: serine 267, serine 268, and serine 273. 2 disordered regions span residues 327-373 (SAAS…SLQP) and 398-451 (NSVT…QQQQ). Pro residues predominate over residues 334–343 (TQPPPPPYPA). Residues 344–359 (PQQQQQQQPQQQQAYT) are compositionally biased toward low complexity. The span at 411-423 (SEPSSDSLNTYSN) shows a compositional bias: polar residues. Residues 438 to 451 (QQQRQQQQQQQQQQ) are compositionally biased toward low complexity.

As to quaternary structure, interacts with melt.

The protein resides in the cytoplasm. The protein localises to the nucleus. In terms of biological role, transcription factor involved in the regulation of the insulin signaling pathway. Consistently activates both the downstream target Thor\d4EBP and the feedback control target InR. Involved in negative regulation of the cell cycle, modulating cell growth and proliferation. In response to cellular stresses, such as nutrient deprivation or increased levels of reactive oxygen species, foxo is activated and inhibits growth through the action of target genes such as Thor. Foxo activated in the adult fat body can regulate lifespan in adults; an insulin peptide itself may function as one secondary messenger of insulin-regulated aging. Also regulates Lip4, homolog of human acid lipases, thereby acting as a key modulator of lipid metabolism by insulin signaling and integrates insulin responses to glucose and lipid homeostasis. The polypeptide is Forkhead box protein O (Drosophila willistoni (Fruit fly)).